Here is a 152-residue protein sequence, read N- to C-terminus: Protein-export protein SecB (152 aa).

Belongs to the SecB family. Homotetramer, a dimer of dimers. One homotetramer interacts with 1 SecA dimer.

Its subcellular location is the cytoplasm. Its function is as follows. One of the proteins required for the normal export of preproteins out of the cell cytoplasm. It is a molecular chaperone that binds to a subset of precursor proteins, maintaining them in a translocation-competent state. It also specifically binds to its receptor SecA. The polypeptide is Protein-export protein SecB (Rickettsia conorii (strain ATCC VR-613 / Malish 7)).